A 289-amino-acid chain; its full sequence is uncharacterized protein (289 aa).

Residues 80–96 (PLNESRTSFKNIPQSRN) show a composition bias toward polar residues. 2 disordered regions span residues 80–101 (PLNE…PRDY) and 136–157 (PREN…RMRE).

This is an uncharacterized protein from Acanthamoeba polyphaga (Amoeba).